The chain runs to 445 residues: GTPase Obg (445 aa).

The region spanning 7–164 is the Obg domain; that stretch reads PEFVDCVTVE…RKLRLEVKSI (158 aa). The OBG-type G domain maps to 165–342; sequence ADVALVGFPS…FTLRLGEICQ (178 aa). GTP-binding positions include 171–178, 196–200, 217–220, 291–294, and 323–325; these read GFPSVGKS, FTTLH, DVPG, NKID, and SAV. 2 residues coordinate Mg(2+): serine 178 and threonine 198. An OCT domain is found at 357–434; sequence IPAKNTPEFS…IGGVIFTWDP (78 aa).

Belongs to the TRAFAC class OBG-HflX-like GTPase superfamily. OBG GTPase family. As to quaternary structure, monomer. It depends on Mg(2+) as a cofactor.

Its subcellular location is the cytoplasm. An essential GTPase which binds GTP, GDP and possibly (p)ppGpp with moderate affinity, with high nucleotide exchange rates and a fairly low GTP hydrolysis rate. Plays a role in control of the cell cycle, stress response, ribosome biogenesis and in those bacteria that undergo differentiation, in morphogenesis control. This chain is GTPase Obg, found in Tropheryma whipplei (strain Twist) (Whipple's bacillus).